A 128-amino-acid chain; its full sequence is DNA-directed RNA polymerase subunit omega (128 aa).

Residues 87–106 (ARSSQAAPKSAPGQEIGKSF) form a disordered region.

Belongs to the RNA polymerase subunit omega family. The RNAP catalytic core consists of 2 alpha, 1 beta, 1 beta' and 1 omega subunit. When a sigma factor is associated with the core the holoenzyme is formed, which can initiate transcription.

It carries out the reaction RNA(n) + a ribonucleoside 5'-triphosphate = RNA(n+1) + diphosphate. Promotes RNA polymerase assembly. Latches the N- and C-terminal regions of the beta' subunit thereby facilitating its interaction with the beta and alpha subunits. This Anaplasma marginale (strain Florida) protein is DNA-directed RNA polymerase subunit omega.